The primary structure comprises 423 residues: Zinc finger protein Gfi-1 (423 aa).

An SNAG domain region spans residues 1–20 (MPRSFLVKSKKAHSYHQPRS). The tract at residues 1 to 76 (MPRSFLVKSK…DRASASPNSC (76 aa)) is disordered. 2 positions are modified to phosphoserine: Ser-20 and Ser-57. Basic and acidic residues predominate over residues 48 to 57 (SKMEPRERLS). The required for interaction with RELA stretch occupies residues 141 to 258 (RQCSALERSA…LLLGGGSYKC (118 aa)). 6 C2H2-type zinc fingers span residues 256–279 (YKCIKCSKVFSTPHGLEVHVRRSH), 285–307 (FACEMCGKTFGHAVSLEQHKAVH), 313–335 (FDCKICGKSFKRSSTLSTHLLIH), 341–363 (YPCQYCGKRFHQKSDMKKHTFIH), 369–391 (HKCQVCGKAFSQSSNLITHSRKH), and 397–420 (FGCDLCGKGFQRKVDLRRHRETQH).

In terms of assembly, interacts (via the zinc-finger domain) with ARIH2; the interaction prevents GFI1 ubiquitination and proteasomal degradation. Forms a complex with EHMT2 and HDAC1 to promote 'Lys-9' dimethylation of H3 (H3K9Me2) and repress expression of target genes. Interacts directly with EHMT2. Interacts with RUNX1T1; the interaction represses HDAC-mediated transcriptional activity. Interacts (via the C-terminal zinc fingers) with ZBTB17; the interaction results in the recruitment of GFI1 to the CDKN1A/p21 and CDKNIB promoters and repression of transcription. Interacts with U2AF1L4. Component of RCOR-GFI-KDM1A-HDAC complexes. Interacts directly with RCOR1, KDM1A and HDAC2. Also interacts with HDAC1. Component of the GFI1-AJUBA-HDAC1 repressor complex. Interacts directly with AJUBA (via its LIM domains); the interaction results in the HDAC-dependent corepression of a subset of GFI1 target genes and, occurs independently of the SNAG domain. Interacts with SPI1; the interaction inhibits SPI1 transcriptional activity targeted at macrophage-specific genes, repressing macrophage differentiation of myeloid progenitor cells and promoting granulocyte commitment. Interacts with PIAS3; the interaction relieves the inhibitory effect of PIAS3 on STAT3-mediated transcriptional activity. Interacts with RELA; the interaction occurs on liposaccharide (LPS) stimulation and controls RELA DNA binding activity and regulates endotoxin-mediated TOLL-like receptor inflammatory response. Ubiquitinated.

The protein localises to the nucleus. In terms of biological role, transcription repressor essential for hematopoiesis. Functions in a cell-context and development-specific manner. Binds to 5'-TAAATCAC[AT]GCA-3' in the promoter region of a large number of genes. Component of several complexes, including the EHMT2-GFI1-HDAC1, AJUBA-GFI1-HDAC1 and RCOR-GFI-KDM1A-HDAC complexes, that suppress, via histone deacetylase (HDAC) recruitment, a number of genes implicated in multilineage blood cell development. Regulates neutrophil differentiation, promotes proliferation of lymphoid cells, and is required for granulocyte development. Inhibits SPI1 transcriptional activity at macrophage-specific genes, repressing macrophage differentiation of myeloid progenitor cells and promoting granulocyte commitment. Mediates, together with U2AF1L4, the alternative splicing of CD45 and controls T-cell receptor signaling. Regulates the endotoxin-mediated Toll-like receptor (TLR) inflammatory response by antagonizing RELA. Cooperates with CBFA2T2 to regulate ITGB1-dependent neurite growth. Controls cell-cycle progression by repressing CDKNIA/p21 transcription in response to TGFB1 via recruitment of GFI1 by ZBTB17 to the CDKNIA/p21 and CDKNIB promoters. Required for the maintenance of inner ear hair cells. In addition to its role in transcription, acts as a substrate adapter for PRMT1 in the DNA damage response. Facilitates the recognition of TP53BP1 and MRE11 substrates by PRMT1, promoting their methylation and the DNA damage response. The chain is Zinc finger protein Gfi-1 (Gfi1) from Mus musculus (Mouse).